Consider the following 623-residue polypeptide: Chaperone protein DnaK (623 aa).

Phosphothreonine; by autocatalysis is present on threonine 175. A disordered region spans residues 580–623; that stretch reads PEGAQGAGFDPNNMGGANAGNASAENDKKDDNVVDADYKVEDDK. Positions 591-603 are enriched in low complexity; the sequence is NNMGGANAGNASA. Residues 604-623 are compositionally biased toward basic and acidic residues; it reads ENDKKDDNVVDADYKVEDDK.

Belongs to the heat shock protein 70 family.

Acts as a chaperone. The chain is Chaperone protein DnaK from Clostridium botulinum (strain Okra / Type B1).